The following is a 153-amino-acid chain: 3-hydroxyacyl-[acyl-carrier-protein] dehydratase FabZ (153 aa).

Residue His-54 is part of the active site.

Belongs to the thioester dehydratase family. FabZ subfamily.

The protein resides in the cytoplasm. It carries out the reaction a (3R)-hydroxyacyl-[ACP] = a (2E)-enoyl-[ACP] + H2O. In terms of biological role, involved in unsaturated fatty acids biosynthesis. Catalyzes the dehydration of short chain beta-hydroxyacyl-ACPs and long chain saturated and unsaturated beta-hydroxyacyl-ACPs. This chain is 3-hydroxyacyl-[acyl-carrier-protein] dehydratase FabZ, found in Shewanella sediminis (strain HAW-EB3).